We begin with the raw amino-acid sequence, 1072 residues long: DNA-directed RNA polymerase subunit beta (1072 aa).

It belongs to the RNA polymerase beta chain family. In terms of assembly, in plastids the minimal PEP RNA polymerase catalytic core is composed of four subunits: alpha, beta, beta', and beta''. When a (nuclear-encoded) sigma factor is associated with the core the holoenzyme is formed, which can initiate transcription.

It localises to the plastid. It is found in the chloroplast. The enzyme catalyses RNA(n) + a ribonucleoside 5'-triphosphate = RNA(n+1) + diphosphate. Its function is as follows. DNA-dependent RNA polymerase catalyzes the transcription of DNA into RNA using the four ribonucleoside triphosphates as substrates. The protein is DNA-directed RNA polymerase subunit beta of Cycas taitungensis (Prince sago).